Here is a 68-residue protein sequence, read N- to C-terminus: UPF0253 protein AHA_2115 (68 aa).

The protein belongs to the UPF0253 family.

In Aeromonas hydrophila subsp. hydrophila (strain ATCC 7966 / DSM 30187 / BCRC 13018 / CCUG 14551 / JCM 1027 / KCTC 2358 / NCIMB 9240 / NCTC 8049), this protein is UPF0253 protein AHA_2115.